The chain runs to 198 residues: T-cell surface glycoprotein CD3 epsilon chain (198 aa).

An N-terminal signal peptide occupies residues Met1–Gly21. The Extracellular segment spans residues Gln22 to Thr120. Residues Ala28–Lys106 form the Ig-like domain. Cys49 and Cys90 are oxidised to a cystine. A helical membrane pass occupies residues Val121–Tyr141. The Cytoplasmic segment spans residues Trp142–Ile198. The disordered stretch occupies residues Val153 to Ile198. Positions Gln166 to Arg183 are NUMB-binding region. In terms of domain architecture, ITAM spans Glu169–Arg196. Residues Arg170–Pro177 form a proline-rich sequence region. Tyr179 and Tyr190 each carry phosphotyrosine.

The TCR-CD3 complex is composed of a CD3D/CD3E and a CD3G/CD3E heterodimers that preferentially associate with TCRalpha and TCRbeta, respectively, to form TCRalpha/CD3E/CD3G and TCRbeta/CD3G/CD3E trimers. In turn, the hexamer interacts with CD3Z homodimer to form the TCR-CD3 complex. Alternatively, TCRalpha and TCRbeta can be replaced by TCRgamma and TCRdelta. Interacts with CD6. Interacts (via Proline-rich sequence) with NCK1; the interaction is ligand dependent but independent of tyrosine kinase activation. In terms of processing, phosphorylated on Tyr residues after T-cell receptor triggering by LCK in association with CD4/CD8.

The protein resides in the cell membrane. Its function is as follows. Part of the TCR-CD3 complex present on T-lymphocyte cell surface that plays an essential role in adaptive immune response. When antigen presenting cells (APCs) activate T-cell receptor (TCR), TCR-mediated signals are transmitted across the cell membrane by the CD3 chains CD3D, CD3E, CD3G and CD3Z. All CD3 chains contain immunoreceptor tyrosine-based activation motifs (ITAMs) in their cytoplasmic domain. Upon TCR engagement, these motifs become phosphorylated by Src family protein tyrosine kinases LCK and FYN, resulting in the activation of downstream signaling pathways. In addition of this role of signal transduction in T-cell activation, CD3E plays an essential role in correct T-cell development. Also participates in internalization and cell surface down-regulation of TCR-CD3 complexes via endocytosis sequences present in CD3E cytosolic region. In addition to its role as a TCR coreceptor, it serves as a receptor for ITPRIPL1. Ligand recognition inhibits T-cell activation by promoting interaction with NCK1, which prevents CD3E-ZAP70 interaction and blocks the ERK-NFkB signaling cascade and calcium influx. This is T-cell surface glycoprotein CD3 epsilon chain (CD3E) from Oryctolagus cuniculus (Rabbit).